A 227-amino-acid polypeptide reads, in one-letter code: LexA repressor (227 aa).

The segment at residues 26–46 (FDEMKEALDLASKSGIHRLIT) is a DNA-binding region (H-T-H motif). Catalysis depends on for autocatalytic cleavage activity residues S147 and K185.

Belongs to the peptidase S24 family. In terms of assembly, homodimer.

It carries out the reaction Hydrolysis of Ala-|-Gly bond in repressor LexA.. Represses a number of genes involved in the response to DNA damage (SOS response), including recA and lexA. In the presence of single-stranded DNA, RecA interacts with LexA causing an autocatalytic cleavage which disrupts the DNA-binding part of LexA, leading to derepression of the SOS regulon and eventually DNA repair. The polypeptide is LexA repressor (Hyphomonas neptunium (strain ATCC 15444)).